Consider the following 282-residue polypeptide: Biotin synthase (282 aa).

A Radical SAM core domain is found at 1-228; it reads MQEIFLCSIS…NARLMVAGGR (228 aa). The [4Fe-4S] cluster site is built by cysteine 17, cysteine 21, and cysteine 24. [2Fe-2S] cluster-binding residues include cysteine 61, cysteine 96, cysteine 154, and arginine 221.

The protein belongs to the radical SAM superfamily. Biotin synthase family. In terms of assembly, homodimer. It depends on [4Fe-4S] cluster as a cofactor. The cofactor is [2Fe-2S] cluster.

It catalyses the reaction (4R,5S)-dethiobiotin + (sulfur carrier)-SH + 2 reduced [2Fe-2S]-[ferredoxin] + 2 S-adenosyl-L-methionine = (sulfur carrier)-H + biotin + 2 5'-deoxyadenosine + 2 L-methionine + 2 oxidized [2Fe-2S]-[ferredoxin]. Its pathway is cofactor biosynthesis; biotin biosynthesis; biotin from 7,8-diaminononanoate: step 2/2. Functionally, catalyzes the conversion of dethiobiotin (DTB) to biotin by the insertion of a sulfur atom into dethiobiotin via a radical-based mechanism. The chain is Biotin synthase from Helicobacter pylori (strain J99 / ATCC 700824) (Campylobacter pylori J99).